The chain runs to 521 residues: Cytoplasmic polyadenylation element-binding protein 2 (521 aa).

The segment covering 1 to 11 has biased composition (pro residues); it reads MNLPQQQPPAA. 2 disordered regions span residues 1-35 and 50-88; these read MNLP…QAAA and PLLK…NMGI. Residues 12–35 are compositionally biased toward low complexity; sequence APQQPQSRRSPVSPQLQQQHQAAA. Position 21 is a phosphoserine (S21). A compositionally biased stretch (polar residues) spans 55 to 70; the sequence is SPWSNHQNSGWGTASM. RRM domains lie at 264–355 and 372–454; these read RKVF…PWNL and KTIF…PYVL.

It belongs to the RRM CPEB family. As to quaternary structure, interacts with TENT2/GLD2. In terms of tissue distribution, expressed in embryo, cerebellum, salivary gland, thymus, heart, liver, lung, spleen, kidney, intestine, ovary and round spermatids. Weakly expressed in granular cells of dentate gyrus and the pyramidal cells of CA3 and CA1 of the hippocampus.

The protein localises to the cytoplasm. Functionally, may play a role in translational regulation of stored mRNAs in transcriptionally inactive haploid spermatids. Binds to poly(U) RNA oligomers. Required for cell cycle progression, specifically for the transition from metaphase to anaphase. The chain is Cytoplasmic polyadenylation element-binding protein 2 (Cpeb2) from Mus musculus (Mouse).